The sequence spans 93 residues: Small ribosomal subunit protein uS19 (93 aa).

The protein belongs to the universal ribosomal protein uS19 family.

In terms of biological role, protein S19 forms a complex with S13 that binds strongly to the 16S ribosomal RNA. The chain is Small ribosomal subunit protein uS19 from Geotalea uraniireducens (strain Rf4) (Geobacter uraniireducens).